Reading from the N-terminus, the 126-residue chain is Large ribosomal subunit protein bL12 (126 aa).

The protein belongs to the bacterial ribosomal protein bL12 family. Homodimer. Part of the ribosomal stalk of the 50S ribosomal subunit. Forms a multimeric L10(L12)X complex, where L10 forms an elongated spine to which 2 to 4 L12 dimers bind in a sequential fashion. Binds GTP-bound translation factors.

Forms part of the ribosomal stalk which helps the ribosome interact with GTP-bound translation factors. Is thus essential for accurate translation. This chain is Large ribosomal subunit protein bL12, found in Nitrosospira multiformis (strain ATCC 25196 / NCIMB 11849 / C 71).